A 391-amino-acid chain; its full sequence is MLAAGRGKRAGSLQKNPKQYRLLGQKPVICHTVRCFCQHPAITTIILVIHPEDRQICEQAITDFKEHLIIVEGGNTRQISTLRGLHALKKFKPKYVHIHDGARPFIENKLLEKIHTTVNHQEGVLPVLPVSDTLKRVNSTHRVLETIPHTHLYSAQTPQCFPFERILAAHERAMQTCKKEFTDDSAIAEWFGIPMHTIPGDSHNIKITWHEDFDTAHLYLKKKMQMFPDIRTGNGYDVHSFEEGTSLILCGIKIPFHKKLKGHSDADVAFHALTDALLATQGAGDIGTHFLPSDPQWKNAPSEIFLRHALEIIKQAGGRIANVDITLIAETPKIGPYRHTMTENLMNILSLSLDRISIKATTNEKLGFIGREEGIAALATATVLYPGEIPK.

Residues 1–230 (MLAAGRGKRA…KKKMQMFPDI (230 aa)) form a 2-C-methyl-D-erythritol 4-phosphate cytidylyltransferase region. The 2-C-methyl-D-erythritol 2,4-cyclodiphosphate synthase stretch occupies residues 231–391 (RTGNGYDVHS…TVLYPGEIPK (161 aa)). Positions 237 and 239 each coordinate a divalent metal cation. Residues 237 to 239 (DVH) and 263 to 264 (HS) contribute to the 4-CDP-2-C-methyl-D-erythritol 2-phosphate site. His271 lines the a divalent metal cation pocket. Residues 285 to 287 (DIG), 361 to 364 (TTNE), Phe368, and Arg371 each bind 4-CDP-2-C-methyl-D-erythritol 2-phosphate.

In the N-terminal section; belongs to the IspD/TarI cytidylyltransferase family. IspD subfamily. It in the C-terminal section; belongs to the IspF family. It depends on a divalent metal cation as a cofactor.

It catalyses the reaction 2-C-methyl-D-erythritol 4-phosphate + CTP + H(+) = 4-CDP-2-C-methyl-D-erythritol + diphosphate. The enzyme catalyses 4-CDP-2-C-methyl-D-erythritol 2-phosphate = 2-C-methyl-D-erythritol 2,4-cyclic diphosphate + CMP. The protein operates within isoprenoid biosynthesis; isopentenyl diphosphate biosynthesis via DXP pathway; isopentenyl diphosphate from 1-deoxy-D-xylulose 5-phosphate: step 2/6. It participates in isoprenoid biosynthesis; isopentenyl diphosphate biosynthesis via DXP pathway; isopentenyl diphosphate from 1-deoxy-D-xylulose 5-phosphate: step 4/6. Bifunctional enzyme that catalyzes the formation of 4-diphosphocytidyl-2-C-methyl-D-erythritol from CTP and 2-C-methyl-D-erythritol 4-phosphate (MEP) (IspD), and catalyzes the conversion of 4-diphosphocytidyl-2-C-methyl-D-erythritol 2-phosphate (CDP-ME2P) to 2-C-methyl-D-erythritol 2,4-cyclodiphosphate (ME-CPP) with a corresponding release of cytidine 5-monophosphate (CMP) (IspF). In Bartonella quintana (strain Toulouse) (Rochalimaea quintana), this protein is Bifunctional enzyme IspD/IspF.